Reading from the N-terminus, the 354-residue chain is Methylthioribose-1-phosphate isomerase (354 aa).

Asp-246 (proton donor) is an active-site residue.

This sequence belongs to the eIF-2B alpha/beta/delta subunits family. MtnA subfamily.

It localises to the cytoplasm. The protein resides in the nucleus. It carries out the reaction 5-(methylsulfanyl)-alpha-D-ribose 1-phosphate = 5-(methylsulfanyl)-D-ribulose 1-phosphate. It functions in the pathway amino-acid biosynthesis; L-methionine biosynthesis via salvage pathway; L-methionine from S-methyl-5-thio-alpha-D-ribose 1-phosphate: step 1/6. Functionally, catalyzes the interconversion of methylthioribose-1-phosphate (MTR-1-P) into methylthioribulose-1-phosphate (MTRu-1-P). The polypeptide is Methylthioribose-1-phosphate isomerase (mri1) (Xenopus laevis (African clawed frog)).